The sequence spans 154 residues: Probable chemoreceptor glutamine deamidase CheD (154 aa).

It belongs to the CheD family.

It catalyses the reaction L-glutaminyl-[protein] + H2O = L-glutamyl-[protein] + NH4(+). In terms of biological role, probably deamidates glutamine residues to glutamate on methyl-accepting chemotaxis receptors (MCPs), playing an important role in chemotaxis. The protein is Probable chemoreceptor glutamine deamidase CheD of Methanococcus vannielii (strain ATCC 35089 / DSM 1224 / JCM 13029 / OCM 148 / SB).